We begin with the raw amino-acid sequence, 677 residues long: UvrABC system protein B (677 aa).

The 388-residue stretch at 25–412 (QGVNGGERYQ…GGEVAQQVIR (388 aa)) folds into the Helicase ATP-binding domain. 38–45 (GATGTGKT) contributes to the ATP binding site. The short motif at 91-114 (YYDYYQPEAYVPVSDTYIAKTASI) is the Beta-hairpin element. Residues 429–591 (QVDDLLGEIR…IVPTAAGKKA (163 aa)) form the Helicase C-terminal domain. Residues 639-674 (PELIDQLEGKMKEAAKKLDFEDAANLRDRIKQLRQK) enclose the UVR domain.

This sequence belongs to the UvrB family. As to quaternary structure, forms a heterotetramer with UvrA during the search for lesions. Interacts with UvrC in an incision complex.

The protein resides in the cytoplasm. In terms of biological role, the UvrABC repair system catalyzes the recognition and processing of DNA lesions. A damage recognition complex composed of 2 UvrA and 2 UvrB subunits scans DNA for abnormalities. Upon binding of the UvrA(2)B(2) complex to a putative damaged site, the DNA wraps around one UvrB monomer. DNA wrap is dependent on ATP binding by UvrB and probably causes local melting of the DNA helix, facilitating insertion of UvrB beta-hairpin between the DNA strands. Then UvrB probes one DNA strand for the presence of a lesion. If a lesion is found the UvrA subunits dissociate and the UvrB-DNA preincision complex is formed. This complex is subsequently bound by UvrC and the second UvrB is released. If no lesion is found, the DNA wraps around the other UvrB subunit that will check the other stand for damage. This Parasynechococcus marenigrum (strain WH8102) protein is UvrABC system protein B.